A 218-amino-acid polypeptide reads, in one-letter code: Thiopurine S-methyltransferase (218 aa).

The S-adenosyl-L-methionine site is built by tryptophan 10, leucine 45, glutamate 66, and arginine 123.

The protein belongs to the class I-like SAM-binding methyltransferase superfamily. TPMT family.

It localises to the cytoplasm. The enzyme catalyses S-adenosyl-L-methionine + a thiopurine = S-adenosyl-L-homocysteine + a thiopurine S-methylether.. The sequence is that of Thiopurine S-methyltransferase from Shewanella sp. (strain W3-18-1).